Consider the following 222-residue polypeptide: Octanoyltransferase (222 aa).

In terms of domain architecture, BPL/LPL catalytic spans 34 to 214 (AEAPSTVLLL…EFRKHEEALV (181 aa)). Substrate contacts are provided by residues 72-79 (RGGKLTWH), 144-146 (AIG), and 157-159 (GIA). The active-site Acyl-thioester intermediate is cysteine 175.

The protein belongs to the LipB family.

The protein resides in the cytoplasm. It catalyses the reaction octanoyl-[ACP] + L-lysyl-[protein] = N(6)-octanoyl-L-lysyl-[protein] + holo-[ACP] + H(+). The protein operates within protein modification; protein lipoylation via endogenous pathway; protein N(6)-(lipoyl)lysine from octanoyl-[acyl-carrier-protein]: step 1/2. In terms of biological role, catalyzes the transfer of endogenously produced octanoic acid from octanoyl-acyl-carrier-protein onto the lipoyl domains of lipoate-dependent enzymes. Lipoyl-ACP can also act as a substrate although octanoyl-ACP is likely to be the physiological substrate. This Arthrobacter sp. (strain FB24) protein is Octanoyltransferase.